Consider the following 483-residue polypeptide: ATP synthase subunit beta (483 aa).

Residue 169–176 (GGAGVGKT) coordinates ATP.

The protein belongs to the ATPase alpha/beta chains family. F-type ATPases have 2 components, CF(1) - the catalytic core - and CF(0) - the membrane proton channel. CF(1) has five subunits: alpha(3), beta(3), gamma(1), delta(1), epsilon(1). CF(0) has three main subunits: a(1), b(2) and c(9-12). The alpha and beta chains form an alternating ring which encloses part of the gamma chain. CF(1) is attached to CF(0) by a central stalk formed by the gamma and epsilon chains, while a peripheral stalk is formed by the delta and b chains.

Its subcellular location is the cell membrane. The enzyme catalyses ATP + H2O + 4 H(+)(in) = ADP + phosphate + 5 H(+)(out). Its function is as follows. Produces ATP from ADP in the presence of a proton gradient across the membrane. The catalytic sites are hosted primarily by the beta subunits. The protein is ATP synthase subunit beta of Rhodococcus erythropolis (strain PR4 / NBRC 100887).